We begin with the raw amino-acid sequence, 400 residues long: Formate-dependent phosphoribosylglycinamide formyltransferase (400 aa).

Residues 22–23 (EL) and glutamate 82 each bind N(1)-(5-phospho-beta-D-ribosyl)glycinamide. Residues arginine 115, lysine 157, 162–167 (SSGKGQ), 197–200 (EGFI), and glutamate 205 contribute to the ATP site. The 196-residue stretch at 120–315 (RLAAETLGLP…EFELHARAIL (196 aa)) folds into the ATP-grasp domain. Glutamate 274 and glutamate 286 together coordinate Mg(2+). N(1)-(5-phospho-beta-D-ribosyl)glycinamide is bound by residues aspartate 293, lysine 362, and 369 to 370 (RR).

The protein belongs to the PurK/PurT family. As to quaternary structure, homodimer.

The catalysed reaction is N(1)-(5-phospho-beta-D-ribosyl)glycinamide + formate + ATP = N(2)-formyl-N(1)-(5-phospho-beta-D-ribosyl)glycinamide + ADP + phosphate + H(+). The protein operates within purine metabolism; IMP biosynthesis via de novo pathway; N(2)-formyl-N(1)-(5-phospho-D-ribosyl)glycinamide from N(1)-(5-phospho-D-ribosyl)glycinamide (formate route): step 1/1. Involved in the de novo purine biosynthesis. Catalyzes the transfer of formate to 5-phospho-ribosyl-glycinamide (GAR), producing 5-phospho-ribosyl-N-formylglycinamide (FGAR). Formate is provided by PurU via hydrolysis of 10-formyl-tetrahydrofolate. The polypeptide is Formate-dependent phosphoribosylglycinamide formyltransferase (Cupriavidus metallidurans (strain ATCC 43123 / DSM 2839 / NBRC 102507 / CH34) (Ralstonia metallidurans)).